The sequence spans 246 residues: Carboxylesterase (246 aa).

The active-site Nucleophile is the Ser-93. Residues Asp-192 and His-222 each act as charge relay system in the active site.

This sequence belongs to the lipase/esterase LIP3/BchO family. As to quaternary structure, homodimer.

It catalyses the reaction a carboxylic ester + H2O = an alcohol + a carboxylate + H(+). In terms of biological role, involved in the detoxification of xenobiotics. Shows maximal activity with C6 substrates, with gradually decreasing activity from C8 to C12 substrates. No activity for higher chain length substrates acids rather than long-chain ones. The polypeptide is Carboxylesterase (est) (Geobacillus stearothermophilus (Bacillus stearothermophilus)).